Reading from the N-terminus, the 306-residue chain is Phenylcoumaran benzylic ether reductase IRL1 (306 aa).

NADP(+) is bound by residues G10–G16, R35, and K44. Residue K132 is the Proton acceptor of the active site. R136 is an NADP(+) binding site.

The protein belongs to the NmrA-type oxidoreductase family. Isoflavone reductase subfamily. In terms of tissue distribution, highly expressed in sclerotesta. Expressed in roots, and two-to-four year stems.

It carries out the reaction (-)-dehydrodiconiferyl alcohol + NADPH + H(+) = (S)-isodihydrodehydrodiconiferyl alcohol + NADP(+). The catalysed reaction is (+)-dehydrodiconiferyl alcohol + NADPH + H(+) = (R)-isodihydrodehydrodiconiferyl alcohol + NADP(+). The enzyme catalyses (2R,3S)-dihydrodehydrodiconiferyl alcohol + NADPH + H(+) = (S)-tetrahydrodehydrodiconiferyl alcohol + NADP(+). It catalyses the reaction (2S,3R)-dihydrodehydrodiconiferyl alcohol + NADPH + H(+) = (R)-tetrahydrodehydrodiconiferyl alcohol + NADP(+). Oxidoreductase involved in lignan biosynthesis. Catalyzes the NADPH-dependent reduction of phenylcoumaran benzylic ethers. Converts dehydrodiconiferyl alcohol (DDC) to isodihydrodehydrodiconiferyl alcohol (IDDDC), and dihydrodehydrodiconiferyl alcohol (DDDC) to tetrahydrodehydrodiconiferyl alcohol (TDDC). May regulate changes in lignin content and accumulation of flavonoids. This is Phenylcoumaran benzylic ether reductase IRL1 from Ginkgo biloba (Ginkgo).